A 604-amino-acid chain; its full sequence is MSFDAKHFLKTVSESPGVYRMLDAEGNVLYVGKAKRLKARLASYFRGALNAKTQALVSRIEDIQVTITRTETEALLLEQTLIKEQRPPYNILLRDDKSYPFIFVSDRHPYPALEFKRARQKRGDGRYLGPFPSTTAVRESLSLMQKIFRIRNCEDSVFAHRTRPCLQYQIQRCSAPCVDYIGREEYQRDIDHAIMCLEGRSEQVTAQLTRDMETASQALDFEEAARLRDQIQQLRRLQERQIVDTGDGDADIFALAERPGGLCISALAVRGGRMLGARHHMPQNGLDLTAEALLGEFISHYYLGHEREIPAEVITALPLADSDVIQAALSERAGKRIRLAHQVRGHRAQWLRLAETNAEQHLTTQLANRSQLAKRFASLRDAMQLQETPTRLECFDISHSHGEATVASCVVFDQDGPVKSDYRRFNIEGVAAGDDYAAMRQALTRRYKRLTQDDSKLPGILIVDGGKGQLNMAREVLEDVGITGTHLLGVAKGTTRKPGLETLFLETVDNSLALDSASPGLHLIQHIRDEAHRFAITGHRQQRDKQRRTSTLQDIPGIGPKRRRELLRFFGGLQGVRQASRDELARVPGISAQMATTIHQALHG.

The region spanning 14–91 is the GIY-YIG domain; that stretch reads ESPGVYRMLD…IKEQRPPYNI (78 aa). One can recognise a UVR domain in the interval 202–237; the sequence is EQVTAQLTRDMETASQALDFEEAARLRDQIQQLRRL. Residues 538–557 form a disordered region; that stretch reads GHRQQRDKQRRTSTLQDIPG.

The protein belongs to the UvrC family. In terms of assembly, interacts with UvrB in an incision complex.

The protein localises to the cytoplasm. Its function is as follows. The UvrABC repair system catalyzes the recognition and processing of DNA lesions. UvrC both incises the 5' and 3' sides of the lesion. The N-terminal half is responsible for the 3' incision and the C-terminal half is responsible for the 5' incision. The protein is UvrABC system protein C of Chromohalobacter salexigens (strain ATCC BAA-138 / DSM 3043 / CIP 106854 / NCIMB 13768 / 1H11).